The chain runs to 625 residues: Vitamin B12 transporter BtuB (625 aa).

An N-terminal signal peptide occupies residues 1-21; it reads MTIKKYTLLTALSVTAFSGWA. The short motif at 31 to 38 is the TonB box element; the sequence is DEMVVTAN. Residues 43-157 enclose the TBDR plug domain; it reads PKSSVLAPVD…IGGVINILTG (115 aa). Cyanocob(III)alamin-binding positions include S90, N97, and 115–116; that span reads IT. Residues 160 to 625 form the TBDR beta-barrel domain; the sequence is KPGTTLSAGL…EYYFTGSYNF (466 aa). Beta stranded transmembrane passes span 163-170, 174-183, and 189-200; these read TTLSAGLG, YQTYDGSTQQ, and TTVTLAGNYTYS. 4 residues coordinate Ca(2+): D204, Q217, D219, and D221. The next 2 beta stranded transmembrane spans lie at 223–233 and 238–254; these read FMGKMLWAGLE and EQFNGFARVYGFDNRSD. Ca(2+) contacts are provided by Y255, D256, and D269. Beta stranded transmembrane passes span 271-285, 287-304, 317-333, 336-345, 363-379, 381-391, 395-410, 413-427, 445-454, 460-469, 484-501, 505-520, 528-540, and 546-561; these read RKLSSRTYDTGLRYK, GIYASQFIASYNRTKDYN, SLDEAEQYNLQWGNTFQ, NGMISAGADW, FTQHNTGIYLTGQQQIS, VTLEGAVRSDD, FGWHSTWQTSAGWEFI, YRLIGSYGTAYKAPN, ESKQWEGGVE, LTWRLSAYRN, YFNINKATIKGVEWTGSF, PLSHQVTLEYLDPRNA, RRAKQQVKYQLDW, and DWSVTYQYLGQRYDKD. Cyanocob(III)alamin is bound at residue S317. A cyanocob(III)alamin-binding site is contributed by R528. Y562 contacts cyanocob(III)alamin. Beta stranded transmembrane passes span 569-583, 596-607, and 613-625; these read TVELGGVSLWDLAVS, IANLFDKDYEMV, and PGREYYFTGSYNF. A TonB C-terminal box motif is present at residues 608 to 625; it reads YGYQTPGREYYFTGSYNF.

It belongs to the TonB-dependent receptor family. BtuB (TC 1.B.14.3.1) subfamily.

It is found in the cell outer membrane. In terms of biological role, involved in the active translocation of vitamin B12 (cyanocobalamin) across the outer membrane to the periplasmic space. It derives its energy for transport by interacting with the trans-periplasmic membrane protein TonB. In Yersinia pestis bv. Antiqua (strain Antiqua), this protein is Vitamin B12 transporter BtuB.